We begin with the raw amino-acid sequence, 285 residues long: Vacuolar protein sorting-associated protein 37B (285 aa).

Residues 50 to 170 (ASNRSLAEGN…EMVLKGQRLP (121 aa)) are interaction with IST1. Residues 84-173 (FEAYQIKKTK…LKGQRLPQAL (90 aa)) form the VPS37 C-terminal domain. The segment at 175–201 (PLPPRLPELAPTAPLPYPAPEASGPPA) is disordered. Arg-218 is subject to Omega-N-methylarginine. The segment at 230–285 (GQAVPYPGLQCPPLPPRVGLPTQQGFSSQFVSPYPPPLPQRPPPRLPPHQPGFILQ) is disordered. The segment covering 250–260 (PTQQGFSSQFV) has biased composition (polar residues). Residues 262–279 (PYPPPLPQRPPPRLPPHQ) are compositionally biased toward pro residues.

It belongs to the VPS37 family. Component of the ESCRT-I complex (endosomal sorting complex required for transport I) which consists of TSG101, VPS28, a VPS37 protein (VPS37A to -D) and MVB12A or MVB12B in a 1:1:1:1 stoichiometry. Interacts with TSG101, VPS28, MVB12A and MVB12B. Component of the ESCRT-I complex (endosomal sorting complex required for transport I) which consists of TSG101, VPS28, a VPS37 protein (VPS37A to -D) and UBAP1 in a 1:1:1:1 stoichiometry. Interacts with CEP55. Interacts with IST1. In terms of tissue distribution, widely expressed. Expressed in macrophages and lymphocytes.

It localises to the late endosome membrane. In terms of biological role, component of the ESCRT-I complex, a regulator of vesicular trafficking process. Required for the sorting of endocytic ubiquitinated cargos into multivesicular bodies. May be involved in cell growth and differentiation. The chain is Vacuolar protein sorting-associated protein 37B (VPS37B) from Homo sapiens (Human).